The chain runs to 144 residues: Ribosomal RNA large subunit methyltransferase H (144 aa).

S-adenosyl-L-methionine-binding positions include Leu-63, Gly-92, and 111 to 116 (LSPMTF).

This sequence belongs to the RNA methyltransferase RlmH family. Homodimer.

The protein localises to the cytoplasm. The catalysed reaction is pseudouridine(1915) in 23S rRNA + S-adenosyl-L-methionine = N(3)-methylpseudouridine(1915) in 23S rRNA + S-adenosyl-L-homocysteine + H(+). In terms of biological role, specifically methylates the pseudouridine at position 1915 (m3Psi1915) in 23S rRNA. This Parasynechococcus marenigrum (strain WH8102) protein is Ribosomal RNA large subunit methyltransferase H.